The following is a 131-amino-acid chain: Profilin-8 (131 aa).

Residues Cys13 and Cys115 are joined by a disulfide bond. Residues 81–97 (AVIRGKKGAGGITIKKT) carry the Involved in PIP2 interaction motif. Position 111 is a phosphothreonine (Thr111).

Belongs to the profilin family. As to quaternary structure, occurs in many kinds of cells as a complex with monomeric actin in a 1:1 ratio. In terms of processing, phosphorylated by MAP kinases.

The protein resides in the cytoplasm. It is found in the cytoskeleton. Its function is as follows. Binds to actin and affects the structure of the cytoskeleton. At high concentrations, profilin prevents the polymerization of actin, whereas it enhances it at low concentrations. This Olea europaea (Common olive) protein is Profilin-8.